A 678-amino-acid polypeptide reads, in one-letter code: Exoribonuclease 2 (678 aa).

The 329-residue stretch at 193–521 (REDLTALPFV…INHRLLKAHI (329 aa)) folds into the RNB domain. In terms of domain architecture, S1 motif spans 568–650 (ETRFQAEIFD…ENRSLVGKPT (83 aa)). The disordered stretch occupies residues 659-678 (ETQTSAEQPAEGAENNEPQV).

It belongs to the RNR ribonuclease family. RNase II subfamily.

Its subcellular location is the cytoplasm. It catalyses the reaction Exonucleolytic cleavage in the 3'- to 5'-direction to yield nucleoside 5'-phosphates.. Functionally, involved in mRNA degradation. Hydrolyzes single-stranded polyribonucleotides processively in the 3' to 5' direction. This chain is Exoribonuclease 2, found in Vibrio cholerae serotype O1 (strain ATCC 39315 / El Tor Inaba N16961).